The sequence spans 256 residues: uncharacterized protein (256 aa).

29 to 36 (GDDHSGKT) contacts ATP.

This is an uncharacterized protein from Saccharomyces cerevisiae (strain ATCC 204508 / S288c) (Baker's yeast).